The primary structure comprises 159 residues: MRIHEVTPKEGSTKRRRRVGRGISAGQGASCGFGMRGQKSRSGTGTKAGFEGGQMPLYRRIPKLKHFPLVNPKHYTIINVGKLESLEPNTEVTLESLMEQGIITTNDGPLKVLGDGTLTKALTVKAAAFSKSAQEKIAATGGSWEVLSRKSQQDTEKDE.

Residues 1–13 (MRIHEVTPKEGST) show a composition bias toward basic and acidic residues. The segment at 1-51 (MRIHEVTPKEGSTKRRRRVGRGISAGQGASCGFGMRGQKSRSGTGTKAGFE) is disordered. Residues 23 to 35 (ISAGQGASCGFGM) show a composition bias toward gly residues.

The protein belongs to the universal ribosomal protein uL15 family. In terms of assembly, part of the 50S ribosomal subunit.

Binds to the 23S rRNA. In Rippkaea orientalis (strain PCC 8801 / RF-1) (Cyanothece sp. (strain PCC 8801)), this protein is Large ribosomal subunit protein uL15.